The sequence spans 134 residues: MRHRSGLRKLNRTSSHRQAMFRNMANSLLRHEVIKTTLPKAKELRRVVEPLITLGKKPSLSNRRLAFNRMRDREMVVKLFDVLGPRFAERNGGYLRILKFGFRDGDNAPLALIELLDRPDEGEEGANVSEAAAA.

This sequence belongs to the bacterial ribosomal protein bL17 family. As to quaternary structure, part of the 50S ribosomal subunit. Contacts protein L32.

The protein is Large ribosomal subunit protein bL17 of Aromatoleum aromaticum (strain DSM 19018 / LMG 30748 / EbN1) (Azoarcus sp. (strain EbN1)).